Consider the following 612-residue polypeptide: Coagulation factor XII (612 aa).

The signal sequence occupies residues 1-19; it reads MRALLLLGALLVSLESTVS. The region spanning 42–90 is the Fibronectin type-II domain; that stretch reads VTGEPCHFPFQYHRQLHHKCIHRGRPGPRPWCATTPNFEKDQRWAYCLE. Disulfide bonds link Cys47-Cys73, Cys61-Cys88, Cys98-Cys110, Cys104-Cys119, Cys121-Cys130, Cys135-Cys163, Cys161-Cys170, Cys178-Cys189, Cys183-Cys198, Cys200-Cys209, Cys217-Cys306, Cys240-Cys288, Cys268-Cys301, Cys355-Cys482, Cys393-Cys409, Cys401-Cys471, Cys432-Cys435, Cys498-Cys566, Cys529-Cys545, and Cys556-Cys587. The EGF-like 1 domain maps to 94-131; it reads VKDHCSKHNPCQKGGTCVNMPDGPRCICADHFTGKHCQ. O-linked (Fuc) threonine glycosylation occurs at Thr109. In terms of domain architecture, Fibronectin type-I spans 133–173; that stretch reads EKCFEPQFFRFFHENEIWHRLEPAGVVKCQCKGPNAQCKPL. The EGF-like 2 domain maps to 174 to 210; the sequence is ASQVCRTNPCLNGGSCLQAEGHRLCRCAPSFAGRLCD. In terms of domain architecture, Kringle spans 217–306; the sequence is CYDDRDRGLS…SWNYCRLAPC (90 aa). N-linked (GlcNAc...) asparagine glycosylation is found at Asn251 and Asn282. One can recognise a Peptidase S1 domain in the interval 369–611; the sequence is VVGGLVALPG…YLAWIREHTA (243 aa). The active-site Charge relay system is the His408. A glycan (N-linked (GlcNAc...) asparagine) is linked at Asn429. The Charge relay system role is filled by Asp457. Ser560 acts as the Charge relay system in catalysis.

It belongs to the peptidase S1 family. Interacts with HRG; the interaction, which is enhanced in the presence of zinc ions and inhibited by heparin-binding, inhibits factor XII autoactivation and contact-initiated coagulation. O- and N-glycosylated.

The protein resides in the secreted. The enzyme catalyses Selective cleavage of Arg-|-Ile bonds in factor VII to form factor VIIa and factor XI to form factor XIa.. Activity is promoted in the presence of negatively charged surfaces. In terms of biological role, factor XII is a serum glycoprotein that participates in the initiation of blood coagulation, fibrinolysis, and the generation of bradykinin and angiotensin. Prekallikrein is cleaved by factor XII to form kallikrein, which then cleaves factor XII first to alpha-factor XIIa and then to beta-factor XIIa. Alpha-factor XIIa activates factor XI to factor XIa. In Bos taurus (Bovine), this protein is Coagulation factor XII (F12).